The primary structure comprises 432 residues: Phosphoprotein associated with glycosphingolipid-enriched microdomains 1 (432 aa).

Over 1-16 the chain is Extracellular; it reads MGPAGSLLGSGQMQIT. Residues 17-37 traverse the membrane as a helical; Signal-anchor for type III membrane protein segment; sequence LWGSLAAVAIFFVITFLIFLC. S-palmitoyl cysteine attachment occurs at residues cysteine 37 and cysteine 40. The Cytoplasmic segment spans residues 38–432; that stretch reads SSCDREKKPR…LQQGRDITRL (395 aa). Residues serine 50 and serine 61 each carry the phosphoserine modification. Position 105 is a phosphotyrosine; by LYN (tyrosine 105). The segment covering 110–122 has biased composition (polar residues); sequence TSASDLLDSQDST. The disordered stretch occupies residues 110 to 137; the sequence is TSASDLLDSQDSTGKPKCHQSRELPRIP. Tyrosine 163, tyrosine 181, and tyrosine 227 each carry phosphotyrosine. Disordered stretches follow at residues 197-230 and 244-432; these read EKGH…YASV and SILG…ITRL. A compositionally biased stretch (basic and acidic residues) spans 220 to 230; it reads GKAEFAEYASV. Residue serine 229 is modified to Phosphoserine. Residues 316–356 show a composition bias toward polar residues; it reads MYSSVNKPGQLVNKSGQSLTVPESTYTSIQGDPQRSPSSCN. The residue at position 317 (tyrosine 317) is a Phosphotyrosine; by FYN and LYN. The interval 317–320 is interaction with CSK; that stretch reads YSSV. Position 354 is a phosphoserine (serine 354). Position 359 is a phosphotyrosine (tyrosine 359). Phosphoserine is present on serine 380. Tyrosine 387 and tyrosine 417 each carry phosphotyrosine. The segment at 430 to 432 is interaction with NHERF1; the sequence is TRL.

As to quaternary structure, interacts with FYN. When phosphorylated, interacts with CSK. Interacts with NHERF1/EBP50. In resting T-cells, part of a PAG1-NHERF1-MSN complex which is disrupted upon TCR activation. Interacts with LYN on plasma membrane lipid rafts. Identified in a complex with LYN and STAT3. Palmitoylated. In terms of processing, phosphorylated by FYN on Tyr-317 in resting T-cells; which promotes interaction with CSK. Dephosphorylated by PTPRC/CD45 upon TCR activation; which leads to CSK dissociation. May also be dephosphorylated by PTPN11. Hyperphosphorylated in mast cells upon FCER1 activation. Phosphorylated by LYN. As to expression, ubiquitously expressed. Present in germinal center B-cells, plasma cells, T-cells, monocytes and platelets (at protein level).

The protein localises to the cell membrane. Negatively regulates TCR (T-cell antigen receptor)-mediated signaling in T-cells and FCER1 (high affinity immunoglobulin epsilon receptor)-mediated signaling in mast cells. Promotes CSK activation and recruitment to lipid rafts, which results in LCK inhibition. Inhibits immunological synapse formation by preventing dynamic arrangement of lipid raft proteins. May be involved in cell adhesion signaling. This is Phosphoprotein associated with glycosphingolipid-enriched microdomains 1 (PAG1) from Homo sapiens (Human).